An 857-amino-acid polypeptide reads, in one-letter code: Autoinducer 2 sensor kinase/phosphatase LuxQ (857 aa).

The next 2 membrane-spanning stretches (helical) occupy residues 14–34 (IASF…VSVL) and 283–303 (FWMA…RWWL). Residues 486 to 706 (KMSHELRTPL…RFEIQLPIEL (221 aa)) form the Histidine kinase domain. Position 489 is a phosphohistidine; by autocatalysis (His-489). The 116-residue stretch at 731–846 (RVLLVEDNHT…TLHKALEHFK (116 aa)) folds into the Response regulatory domain. 4-aspartylphosphate is present on Asp-780.

Binds the complex formed by AI-2 and LuxP.

The protein resides in the cell inner membrane. The catalysed reaction is ATP + protein L-histidine = ADP + protein N-phospho-L-histidine.. At low cell density, in absence of AI-2 (autoinducer 2), LuxQ has a kinase activity and autophosphorylates on a histidine residue. The phosphoryl group is then transferred to an aspartate residue in the response regulator domain. The phosphoryl group is transferred to LuxU, and ultimately to LuxO. At high cell density, in the presence of AI-2, the kinase activity is inactivated, and the response regulator domain has a phosphatase activity. This Vibrio cholerae serotype O1 (strain ATCC 39315 / El Tor Inaba N16961) protein is Autoinducer 2 sensor kinase/phosphatase LuxQ (luxQ).